The following is a 177-amino-acid chain: MSKNDHLSDDELSLFREAVQGSKKLQQDTIIHQPSKNFSDLQQQRKSLKEGKNEEFFFSDEFVPLLSEDGPIRYARDDVSKYEVKRLRRGVYVPDVFLDMHGMKQDEAKRELGSMIAYCLKENISCASVMHGIGKHILKQKVPLWLAQHPDVMAFHQAPLEFGGAGAILVLLSIPDR.

The Smr domain occupies 98–173; that stretch reads LDMHGMKQDE…GAGAILVLLS (76 aa).

Belongs to the SmrB family. In terms of assembly, associates with collided ribosomes, but not with correctly translating polysomes.

Functionally, acts as a ribosome collision sensor. Detects stalled/collided disomes (pairs of ribosomes where the leading ribosome is stalled and a second ribosome has collided with it) and endonucleolytically cleaves mRNA at the 5' boundary of the stalled ribosome. Stalled/collided disomes form a new interface (primarily via the 30S subunits) that binds SmrB. Cleaved mRNA becomes available for tmRNA ligation, leading to ribosomal subunit dissociation and rescue of stalled ribosomes. This Aliivibrio fischeri (strain ATCC 700601 / ES114) (Vibrio fischeri) protein is Ribosome rescue factor SmrB.